Consider the following 385-residue polypeptide: NifS/IcsS protein homolog (385 aa).

Pyridoxal 5'-phosphate contacts are provided by residues 69-70 (GT), Asn149, Gln178, and 199-201 (SSH). Lys202 carries the N6-(pyridoxal phosphate)lysine modification. Residue Thr237 coordinates pyridoxal 5'-phosphate. Cys325 acts as the Cysteine persulfide intermediate in catalysis. Cys325 provides a ligand contact to [2Fe-2S] cluster.

This sequence belongs to the class-V pyridoxal-phosphate-dependent aminotransferase family. NifS/IscS subfamily. Pyridoxal 5'-phosphate is required as a cofactor.

The sequence is that of NifS/IcsS protein homolog from Lactobacillus delbrueckii subsp. bulgaricus (strain ATCC 11842 / DSM 20081 / BCRC 10696 / JCM 1002 / NBRC 13953 / NCIMB 11778 / NCTC 12712 / WDCM 00102 / Lb 14).